A 329-amino-acid chain; its full sequence is Beta-ketoacyl-[acyl-carrier-protein] synthase III (329 aa).

Residues cysteine 114 and histidine 255 contribute to the active site. The ACP-binding stretch occupies residues 256–260 (QANQR). Residue asparagine 285 is part of the active site.

The protein belongs to the thiolase-like superfamily. FabH family. As to quaternary structure, homodimer.

Its subcellular location is the cytoplasm. The catalysed reaction is malonyl-[ACP] + acetyl-CoA + H(+) = 3-oxobutanoyl-[ACP] + CO2 + CoA. It participates in lipid metabolism; fatty acid biosynthesis. In terms of biological role, catalyzes the condensation reaction of fatty acid synthesis by the addition to an acyl acceptor of two carbons from malonyl-ACP. Catalyzes the first condensation reaction which initiates fatty acid synthesis and may therefore play a role in governing the total rate of fatty acid production. Possesses both acetoacetyl-ACP synthase and acetyl transacylase activities. Its substrate specificity determines the biosynthesis of branched-chain and/or straight-chain of fatty acids. The protein is Beta-ketoacyl-[acyl-carrier-protein] synthase III of Thermosynechococcus vestitus (strain NIES-2133 / IAM M-273 / BP-1).